We begin with the raw amino-acid sequence, 390 residues long: Mannitol-1-phosphate 5-dehydrogenase (390 aa).

3–14 contributes to the NAD(+) binding site; the sequence is ALHFGAGNIGRG.

This sequence belongs to the mannitol dehydrogenase family.

It carries out the reaction D-mannitol 1-phosphate + NAD(+) = beta-D-fructose 6-phosphate + NADH + H(+). This is Mannitol-1-phosphate 5-dehydrogenase from Buchnera aphidicola subsp. Baizongia pistaciae (strain Bp).